Here is a 236-residue protein sequence, read N- to C-terminus: CO-responsive transcriptional regulator RcoM (236 aa).

Residues 1-64 form the PAS domain; the sequence is MDDFAYNLRR…PLRPKVAVLL (64 aa). Histidine 52 provides a ligand contact to heme. One can recognise an HTH LytTR-type domain in the interval 131-236; the sequence is VPLGLGETTE…VTRLRGLLAI (106 aa).

Heme is required as a cofactor.

Activates the expression of the CowN protein in response to carbon monoxide (CO). Is required to sustain N(2)-dependent growth in the presence of low levels of carbon monoxide (CO). In Rhodospirillum rubrum (strain ATCC 11170 / ATH 1.1.1 / DSM 467 / LMG 4362 / NCIMB 8255 / S1), this protein is CO-responsive transcriptional regulator RcoM (rcoM).